The chain runs to 135 residues: S-protein homolog 29 (135 aa).

Positions 1-24 are cleaved as a signal peptide; the sequence is MKNSSKIFVVLSIILFYVISSCHG. N-linked (GlcNAc...) asparagine glycosylation is present at Asn-110.

This sequence belongs to the plant self-incompatibility (S1) protein family.

The protein resides in the secreted. The polypeptide is S-protein homolog 29 (Arabidopsis thaliana (Mouse-ear cress)).